The chain runs to 498 residues: N-acyl-D-aspartate deacylase (498 aa).

The segment at 478–498 is disordered; it reads AERPGQVLAPGDAIPWSQQSE.

This sequence belongs to the metallo-dependent hydrolases superfamily. N-acyl-D-amino-acid deacylase family. Zn(2+) is required as a cofactor.

It is found in the cytoplasm. The catalysed reaction is an N-acyl-D-aspartate + H2O = D-aspartate + a carboxylate. In Alcaligenes xylosoxydans xylosoxydans (Achromobacter xylosoxidans), this protein is N-acyl-D-aspartate deacylase.